Consider the following 95-residue polypeptide: MSVDQATVRRVAHLARISVREDELGHLQNELNAILEFVEQLADLDVSGVEPLTSVVPVELPMREDVVTDGHCPEKVLANAPDAEGGFFTVPKVVE.

It belongs to the GatC family. As to quaternary structure, heterotrimer of A, B and C subunits.

It catalyses the reaction L-glutamyl-tRNA(Gln) + L-glutamine + ATP + H2O = L-glutaminyl-tRNA(Gln) + L-glutamate + ADP + phosphate + H(+). The catalysed reaction is L-aspartyl-tRNA(Asn) + L-glutamine + ATP + H2O = L-asparaginyl-tRNA(Asn) + L-glutamate + ADP + phosphate + 2 H(+). In terms of biological role, allows the formation of correctly charged Asn-tRNA(Asn) or Gln-tRNA(Gln) through the transamidation of misacylated Asp-tRNA(Asn) or Glu-tRNA(Gln) in organisms which lack either or both of asparaginyl-tRNA or glutaminyl-tRNA synthetases. The reaction takes place in the presence of glutamine and ATP through an activated phospho-Asp-tRNA(Asn) or phospho-Glu-tRNA(Gln). This Xanthobacter autotrophicus (strain ATCC BAA-1158 / Py2) protein is Aspartyl/glutamyl-tRNA(Asn/Gln) amidotransferase subunit C.